The sequence spans 187 residues: Adenine phosphoribosyltransferase (187 aa).

Belongs to the purine/pyrimidine phosphoribosyltransferase family. As to quaternary structure, homodimer.

Its subcellular location is the cytoplasm. The enzyme catalyses AMP + diphosphate = 5-phospho-alpha-D-ribose 1-diphosphate + adenine. It participates in purine metabolism; AMP biosynthesis via salvage pathway; AMP from adenine: step 1/1. In terms of biological role, catalyzes a salvage reaction resulting in the formation of AMP, that is energically less costly than de novo synthesis. This chain is Adenine phosphoribosyltransferase, found in Yersinia pseudotuberculosis serotype O:3 (strain YPIII).